The chain runs to 273 residues: Kit ligand (273 aa).

Residues 1-25 form the signal peptide; it reads MKKTQTWIITCIYLQLLLFNPLVKT. Q26 carries the post-translational modification Pyrrolidone carboxylic acid. Topologically, residues 26-214 are extracellular; that stretch reads QEICRNPVTD…AKSPEDPGLQ (189 aa). Cystine bridges form between C29–C114 and C68–C163. A glycan (N-linked (GlcNAc...) asparagine; partial) is linked at N90. N-linked (GlcNAc...) asparagine glycosylation is present at N145. S167 carries O-linked (GalNAc...) serine glycosylation. T168 and T180 each carry an O-linked (GalNAc...) threonine glycan. The segment at 190-211 is disordered; sequence ASSLRNDSSSSNRKAAKSPEDP. Residues 191–202 are compositionally biased toward low complexity; sequence SSLRNDSSSSNR. Residue N195 is glycosylated (N-linked (GlcNAc...) asparagine). Residues 215–237 traverse the membrane as a helical segment; that stretch reads WTAMALPALISLVIGFAFGALYW. The Cytoplasmic portion of the chain corresponds to 238 to 273; that stretch reads KKKQSSLTRAVENIQINEEDNEISMLQQKEREFQEV.

The protein belongs to the SCF family. Homodimer, non-covalently linked. Heterotetramer with KIT, binding two KIT molecules; thereby mediates KIT dimerization and subsequent activation by autophosphorylation. Post-translationally, a soluble form is produced by proteolytic processing of isoform 1 in the extracellular domain. In terms of processing, the identity of N- and O-linked saccharides is not reported in PubMed:1708771. The O-linked polysaccharides are probably the mucin type linked to GalNAc.

It is found in the cell membrane. The protein resides in the cytoplasm. The protein localises to the cytoskeleton. Its subcellular location is the cell projection. It localises to the lamellipodium. It is found in the filopodium. The protein resides in the secreted. In terms of biological role, ligand for the receptor-type protein-tyrosine kinase KIT. Plays an essential role in the regulation of cell survival and proliferation, hematopoiesis, stem cell maintenance, gametogenesis, mast cell development, migration and function, and in melanogenesis. KITLG/SCF binding can activate several signaling pathways. Promotes phosphorylation of PIK3R1, the regulatory subunit of phosphatidylinositol 3-kinase, and subsequent activation of the kinase AKT1. KITLG/SCF and KIT also transmit signals via GRB2 and activation of RAS, RAF1 and the MAP kinases MAPK1/ERK2 and/or MAPK3/ERK1. KITLG/SCF and KIT promote activation of STAT family members STAT1, STAT3 and STAT5. KITLG/SCF and KIT promote activation of PLCG1, leading to the production of the cellular signaling molecules diacylglycerol and inositol 1,4,5-trisphosphate. KITLG/SCF acts synergistically with other cytokines, probably interleukins. The polypeptide is Kit ligand (Kitlg) (Rattus norvegicus (Rat)).